The following is a 197-amino-acid chain: Transposon Tn10 TetC protein (197 aa).

One can recognise an HTH tetR-type domain in the interval 12-72; it reads KSTYQSLVNS…ACYKQQLIMI (61 aa). A DNA-binding region (H-T-H motif) is located at residues 35–54; the sequence is SIDEISGKALVTKGAFYHHF.

In Escherichia coli, this protein is Transposon Tn10 TetC protein (tetC).